A 967-amino-acid polypeptide reads, in one-letter code: MPELNFKAIEEKWQKRWLEAKIFEPNIKDKPKEKKFYITVAFPYLSGHLHVGHARTYTIPDVIARFKRMQGYNVLFPMAWHITGSPIVGIAERIKNRDPQTIWIYRDVYKVPEDILWTFEDPVNIVKYFMKAAKETFIRAGFSVDWSREFYTTSLFPPFSKFIEWQFWKLKEKGYIVKGTHRVRWDPVVGTPLGDHDLMDGEDVPILEYILIKFELKEGEETVYLPAATLRPETVYGVTNMWLNPEATYVKAKVKKGDKVETWIISKEAAYKLSFQDREIEVVEEFKGEKLIGKFVRNPVTGDEVIILPAEFVDPDNATGVVMSVPAHAPFDHVALEDLKKQTDILLKYDIDPRIVENITYISLIKLEGYGEFPAVEEVQKLGVKSQKDKDKLEQATKTIYRAEYHKGIFKIPPYEGKPVSEVKELIAKDLMEKGIGEIMYEFAEKNVISRFGNRAVIKIIHDQWFIDYGNPEWKEKAREALKRMKILPESRRAQFEAIIEWLDKKACARKVGLGTPLPWDPDWVIESLSDSTIYMAYYTISRHINKLREEGKLDPEKLTPEFFDYIFLEEFDEKKEKELEEKTGISAEIIHEMKEEFEYWYPLDWRCSAKDLIPNHLTFFIFNHVAIFPEKHWPKGIAVNGFGTLEGQKMSKSKGNVLNFIDAIEENGADVVRLYIMSLAEHDSDFDWRRKEVGRLRKQIERFYELISQFAEYEARENVELKDIDKWMLHRLNKAIKGTTDALEEFRTRTAVQWAFYTIMNDLRWYLRRTEGRDDEAKRYVLRTLADIWVRLMAPFTPHICEELWEKLGGEGFVSLAKWPDPVEEWWNETIEAEEEYVKSVMEDIKEIIEVAKIENARRAYIYTAEDWKWKVVEVVAEKRDFKAAMSELMKDQELRKRGKEIAKIVERLIKDRAFEVKRIDEEKVLREAKDFIEKELGIEIIINPSEDKGGKKKQAMPLKPAIFIE.

Residues 43 to 53 (PYLSGHLHVGH) carry the 'HIGH' region motif. The short motif at 650–654 (KMSKS) is the 'KMSKS' region element. Residue Lys653 participates in ATP binding.

It belongs to the class-I aminoacyl-tRNA synthetase family.

It localises to the cytoplasm. The enzyme catalyses tRNA(Leu) + L-leucine + ATP = L-leucyl-tRNA(Leu) + AMP + diphosphate. The protein is Leucine--tRNA ligase of Pyrococcus furiosus (strain ATCC 43587 / DSM 3638 / JCM 8422 / Vc1).